The chain runs to 124 residues: UPF0738 protein ABC2521 (124 aa).

The protein belongs to the UPF0738 family.

This chain is UPF0738 protein ABC2521, found in Shouchella clausii (strain KSM-K16) (Alkalihalobacillus clausii).